The chain runs to 403 residues: GPI mannosyltransferase 1 (403 aa).

Residues 1–4 (MTGE) are Cytoplasmic-facing. Residues 5-25 (EWGLTVLSFLVRVGFFLFGIY) form a helical membrane-spanning segment. The Lumenal portion of the chain corresponds to 26-78 (QDANFKVRYTDIDYFVFHDAAKYVYEGKSPYARDTYRYTPLLSWLLVPNHYFG). A helical transmembrane segment spans residues 79–99 (WFHLGKVIFVIFDLVTGLIIM). Residues 100 to 110 (KLLNQAISRKR) are Cytoplasmic-facing. The chain crosses the membrane as a helical span at residues 111–131 (ALILESIWLLNPMVITISTRG). Residue Asn-132 is a topological domain, lumenal. A helical membrane pass occupies residues 133 to 149 (AESVLCCLIMFTLFFLQ). Residues 150 to 160 (KSRYTLAGILY) are Cytoplasmic-facing. The chain crosses the membrane as a helical span at residues 161–181 (GLSIHFKIYPIIYCIPIAIFI). The Lumenal segment spans residues 182–193 (YYNKRNQGPRTQ). A helical transmembrane segment spans residues 194 to 214 (LTSLLNIGLSTLTTLLGCGWA). Residues 215-266 (MYKIYGYEFLDQAYLYHLYRTDHRHNFSVWNMLLYLDSANKENGESNLSRYA) lie on the Cytoplasmic side of the membrane. The helical transmembrane segment at 267-287 (FVPQLLLVLVTGCLEWWNPTF) threads the bilayer. The Lumenal portion of the chain corresponds to 288 to 310 (DNLLRVLFVQTFAFVTYNKVCTS). Residues 311 to 331 (QYFVWYLIFLPFYLSRTHIGW) traverse the membrane as a helical segment. Residues 332-334 (KKG) are Cytoplasmic-facing. Residues 335–355 (LLMATLWVGTQGIWLSQGYYL) form a helical membrane-spanning segment. Topologically, residues 356-361 (EFEGKN) are lumenal. A helical transmembrane segment spans residues 362–382 (VFYPGLFIASVLFFVTNVWLL). At 383–403 (GQFITDIKIPTQPTVSNKKNN) the chain is on the cytoplasmic side.

This sequence belongs to the PIGM family.

Its subcellular location is the endoplasmic reticulum membrane. It participates in glycolipid biosynthesis; glycosylphosphatidylinositol-anchor biosynthesis. Mannosyltransferase involved in glycosylphosphatidylinositol-anchor biosynthesis. Transfers the first alpha-1,4-mannose to GlcN-acyl-PI during GPI precursor assembly. Required for cell wall integrity. This Saccharomyces cerevisiae (strain ATCC 204508 / S288c) (Baker's yeast) protein is GPI mannosyltransferase 1 (GPI14).